The chain runs to 298 residues: Ribosomal RNA small subunit methyltransferase A (298 aa).

Residues asparagine 30, valine 32, glycine 57, glutamate 78, aspartate 108, and asparagine 126 each coordinate S-adenosyl-L-methionine.

Belongs to the class I-like SAM-binding methyltransferase superfamily. rRNA adenine N(6)-methyltransferase family. RsmA subfamily.

The protein localises to the cytoplasm. The catalysed reaction is adenosine(1518)/adenosine(1519) in 16S rRNA + 4 S-adenosyl-L-methionine = N(6)-dimethyladenosine(1518)/N(6)-dimethyladenosine(1519) in 16S rRNA + 4 S-adenosyl-L-homocysteine + 4 H(+). Specifically dimethylates two adjacent adenosines (A1518 and A1519) in the loop of a conserved hairpin near the 3'-end of 16S rRNA in the 30S particle. May play a critical role in biogenesis of 30S subunits. The chain is Ribosomal RNA small subunit methyltransferase A from Cutibacterium acnes (strain DSM 16379 / KPA171202) (Propionibacterium acnes).